Consider the following 126-residue polypeptide: Nascent polypeptide-associated complex protein (126 aa).

In terms of domain architecture, NAC-A/B spans 10-77 (PRMMKQMQKM…AKKVAKEEEK (68 aa)).

This sequence belongs to the NAC-alpha family. In terms of assembly, homodimer. Interacts with the ribosome. Binds ribosomal RNA.

In terms of biological role, contacts the emerging nascent chain on the ribosome. The polypeptide is Nascent polypeptide-associated complex protein (Methanococcus maripaludis (strain C7 / ATCC BAA-1331)).